The chain runs to 539 residues: GMP synthase [glutamine-hydrolyzing] (539 aa).

One can recognise a Glutamine amidotransferase type-1 domain in the interval 4–202 (KILILDFGSQ…VLGICRAKAD (199 aa)). The active-site Nucleophile is the Cys-81. Active-site residues include His-176 and Glu-178. One can recognise a GMPS ATP-PPase domain in the interval 203 to 395 (WVMKDHIEEA…LGLPPEMVYR (193 aa)). Residue 230 to 236 (SGGVDSS) coordinates ATP.

In terms of assembly, homodimer.

The enzyme catalyses XMP + L-glutamine + ATP + H2O = GMP + L-glutamate + AMP + diphosphate + 2 H(+). The protein operates within purine metabolism; GMP biosynthesis; GMP from XMP (L-Gln route): step 1/1. Catalyzes the synthesis of GMP from XMP. This chain is GMP synthase [glutamine-hydrolyzing], found in Cupriavidus pinatubonensis (strain JMP 134 / LMG 1197) (Cupriavidus necator (strain JMP 134)).